A 902-amino-acid polypeptide reads, in one-letter code: Transcription factor FPSE_08121 (902 aa).

The segment at 1–47 (MVSPDNRPGTQGPSASAHAHDSRVPRKRPGSWDNNPSTAGNRAVKKR) is disordered. Residues 52–81 (CVSCRDRKVRCDVVNGGPPCTNCRLDDVDC) constitute a DNA-binding region (zn(2)-C6 fungal-type). 4 disordered regions span residues 92-189 (NPAR…EAEQ), 208-234 (HCEQQPQPQPSQGAATRSTPSAQPANP), 258-277 (ATEAPPSSSRMDNVSASANT), and 820-839 (TGVALTGQRSRQPSAGPNMT). Residues 120–137 (TDADTAAPGPAPGSASAT) show a composition bias toward low complexity. Over residues 168 to 177 (ETICDDDENE) the composition is skewed to acidic residues. Polar residues-rich tracts occupy residues 178-187 (NNSWHNQQEA), 220-234 (GAATRSTPSAQPANP), 262-277 (PPSSSRMDNVSASANT), and 826-839 (GQRSRQPSAGPNMT).

It localises to the nucleus. In terms of biological role, transcription factor; part of the Fusarium detoxification of benzoxazolinone cluster involved in the degradation of benzoxazolinones produced by the host plant. Maize, wheat, and rye produce the 2 benzoxazinone phytoanticipins 2,4-dihy-droxy-7-methoxy-1,4-benzoxazin-3-one (DIMBOA) and 2,4-dihydroxy-1,4-benzoxazin-3-one (DIBOA) that, due to their inherent instability once released, spontaneously degrade to the more stable corresponding benzoxazolinones, 6-methoxy-2-benzoxazolinone (MBOA) and 2-benzoxazolinone (BOA), respectively. FPSE_08121 positively regulates the expression of the FBD cluster gene FPSE_08120 in response to 2-aminophenol (2-AP) treatment and contributes quantitatively to benzoxazolinone tolerance. The protein is Transcription factor FPSE_08121 of Fusarium pseudograminearum (strain CS3096) (Wheat and barley crown-rot fungus).